The sequence spans 411 residues: ATPase GET3B (411 aa).

The transit peptide at 1-67 (MATLSSYLLS…RRRNSLQVKS (67 aa)) directs the protein to the chloroplast. 95 to 102 (KGGVGKTS) contacts ATP. Asp-124 is an active-site residue. Asn-348 serves as a coordination point for ATP.

The protein belongs to the arsA ATPase family.

The protein resides in the plastid. It is found in the chloroplast stroma. The enzyme catalyses ATP + H2O = ADP + phosphate + H(+). This Arabidopsis thaliana (Mouse-ear cress) protein is ATPase GET3B.